The sequence spans 126 residues: MTATRCCLWLLLLGTCMALLLPEAWGAPLEPVYPGDDATPQQMAQYAAEMRRYINMLTRPRYGKSAEEDALGLPVWRQSHAAAPGGSHRHPPAGLPAAKGGTGVSGSPPKPWDCLPCRAHSLPSQS.

An N-terminal signal peptide occupies residues 1-26 (MTATRCCLWLLLLGTCMALLLPEAWG). Tyrosine amide is present on Y62. The disordered stretch occupies residues 77 to 126 (RQSHAAAPGGSHRHPPAGLPAAKGGTGVSGSPPKPWDCLPCRAHSLPSQS).

Belongs to the NPY family. In terms of processing, no icosapeptide-like peptide is cleaved from the C-terminal.

Its subcellular location is the secreted. Functionally, hormone secreted by pancreatic cells that acts as a regulator of pancreatic and gastrointestinal functions probably by signaling through the G protein-coupled receptor NPY4R2. The protein is Pancreatic polypeptide prohormone (PPY) of Cavia porcellus (Guinea pig).